A 614-amino-acid chain; its full sequence is Acetylcholinesterase (614 aa).

A signal peptide spans 1 to 31 (MRPPWYPLHTPSLAFPLLFLLLSLLGGGARA). Cysteine 100 and cysteine 127 form a disulfide bridge. Serine 234 (acyl-ester intermediate) is an active-site residue. A disulfide bridge links cysteine 288 with cysteine 303. A glycan (N-linked (GlcNAc...) asparagine) is linked at asparagine 296. Glutamate 365 (charge relay system) is an active-site residue. The N-linked (GlcNAc...) asparagine glycan is linked to asparagine 381. Cysteine 440 and cysteine 560 form a disulfide bridge. Histidine 478 functions as the Charge relay system in the catalytic mechanism. Asparagine 495 carries N-linked (GlcNAc...) asparagine glycosylation.

It belongs to the type-B carboxylesterase/lipase family. As to quaternary structure, isoform H generates GPI-anchored dimers; disulfide linked. Isoform T generates multiple structures, ranging from monomers and dimers to collagen-tailed and hydrophobic-tailed forms, in which catalytic tetramers are associated with anchoring proteins that attach them to the basal lamina or to cell membranes. In the collagen-tailed forms, isoform T subunits are associated with a specific collagen, COLQ, which triggers the formation of isoform T tetramers, from monomers and dimers. Interacts with PRIMA1. The interaction with PRIMA1 is required to anchor it to the basal lamina of cells and organize into tetramers. Predominates in most expressing tissues except erythrocytes where a glycophospholipid-attached form of ACHE predominates.

It localises to the synapse. The protein resides in the secreted. Its subcellular location is the cell membrane. It catalyses the reaction acetylcholine + H2O = choline + acetate + H(+). Functionally, terminates signal transduction at the neuromuscular junction by rapid hydrolysis of the acetylcholine released into the synaptic cleft. This chain is Acetylcholinesterase (Ache), found in Mus musculus (Mouse).